We begin with the raw amino-acid sequence, 182 residues long: Lipoprotein signal peptidase (182 aa).

3 consecutive transmembrane segments (helical) span residues 12-32 (VAVFACVAAAALIVDQLTKAW), 68-88 (ATWVISLLAVVACVALAVAGV), and 91-111 (VSMKWSVAISFAFAGALGNLI). Active-site residues include D127 and D140. Residues 135–155 (VGNVADIYLVVAGVVLVILIL) traverse the membrane as a helical segment.

Belongs to the peptidase A8 family.

It localises to the cell membrane. It catalyses the reaction Release of signal peptides from bacterial membrane prolipoproteins. Hydrolyzes -Xaa-Yaa-Zaa-|-(S,diacylglyceryl)Cys-, in which Xaa is hydrophobic (preferably Leu), and Yaa (Ala or Ser) and Zaa (Gly or Ala) have small, neutral side chains.. The protein operates within protein modification; lipoprotein biosynthesis (signal peptide cleavage). In terms of biological role, this protein specifically catalyzes the removal of signal peptides from prolipoproteins. The chain is Lipoprotein signal peptidase from Bifidobacterium longum (strain DJO10A).